We begin with the raw amino-acid sequence, 188 residues long: Elongation factor P (188 aa).

K34 carries the N6-(3,6-diaminohexanoyl)-5-hydroxylysine modification.

It belongs to the elongation factor P family. May be beta-lysylated on the epsilon-amino group of Lys-34 by the combined action of EpmA and EpmB, and then hydroxylated on the C5 position of the same residue by EpmC (if this protein is present). Lysylation is critical for the stimulatory effect of EF-P on peptide-bond formation. The lysylation moiety may extend toward the peptidyltransferase center and stabilize the terminal 3-CCA end of the tRNA. Hydroxylation of the C5 position on Lys-34 may allow additional potential stabilizing hydrogen-bond interactions with the P-tRNA.

It localises to the cytoplasm. Its pathway is protein biosynthesis; polypeptide chain elongation. Functionally, involved in peptide bond synthesis. Alleviates ribosome stalling that occurs when 3 or more consecutive Pro residues or the sequence PPG is present in a protein, possibly by augmenting the peptidyl transferase activity of the ribosome. Modification of Lys-34 is required for alleviation. The sequence is that of Elongation factor P from Glaesserella parasuis serovar 5 (strain SH0165) (Haemophilus parasuis).